Here is a 299-residue protein sequence, read N- to C-terminus: MPT51/MPB51 antigen (299 aa).

Positions 1-26 (MKGRSALLRALWIAALSFGLGGVAVA) are cleaved as a signal peptide.

This sequence belongs to the mycobacterial A85 antigen family. Homodimer.

The protein resides in the secreted. Its function is as follows. May have a role in host tissue attachment, whereby ligands may include the serum protein fibronectin and small sugars. The protein is MPT51/MPB51 antigen (mpt51) of Mycobacterium bovis (strain ATCC BAA-935 / AF2122/97).